A 79-amino-acid chain; its full sequence is Small ribosomal subunit protein bS18B (79 aa).

This sequence belongs to the bacterial ribosomal protein bS18 family. Part of the 30S ribosomal subunit. Forms a tight heterodimer with protein bS6.

In terms of biological role, binds as a heterodimer with protein bS6 to the central domain of the 16S rRNA, where it helps stabilize the platform of the 30S subunit. This is Small ribosomal subunit protein bS18B from Saccharopolyspora erythraea (strain ATCC 11635 / DSM 40517 / JCM 4748 / NBRC 13426 / NCIMB 8594 / NRRL 2338).